A 549-amino-acid polypeptide reads, in one-letter code: Oxygen-dependent choline dehydrogenase (549 aa).

An FAD-binding site is contributed by 4–33 (DFVIIGSGSAGSAMAYRLSEDGRYSVIVIE). The active-site Proton acceptor is His-465.

The protein belongs to the GMC oxidoreductase family. Requires FAD as cofactor.

The enzyme catalyses choline + A = betaine aldehyde + AH2. It carries out the reaction betaine aldehyde + NAD(+) + H2O = glycine betaine + NADH + 2 H(+). The protein operates within amine and polyamine biosynthesis; betaine biosynthesis via choline pathway; betaine aldehyde from choline (cytochrome c reductase route): step 1/1. Involved in the biosynthesis of the osmoprotectant glycine betaine. Catalyzes the oxidation of choline to betaine aldehyde and betaine aldehyde to glycine betaine at the same rate. This Brucella anthropi (strain ATCC 49188 / DSM 6882 / CCUG 24695 / JCM 21032 / LMG 3331 / NBRC 15819 / NCTC 12168 / Alc 37) (Ochrobactrum anthropi) protein is Oxygen-dependent choline dehydrogenase.